A 78-amino-acid chain; its full sequence is Putative antitoxin PF1222 (78 aa).

The protein belongs to the UPF0330 family.

Functionally, possibly the antitoxin component of a type II toxin-antitoxin (TA) system. In Pyrococcus furiosus (strain ATCC 43587 / DSM 3638 / JCM 8422 / Vc1), this protein is Putative antitoxin PF1222.